A 486-amino-acid polypeptide reads, in one-letter code: Probable FAD-binding monooxygenase ltbD (486 aa).

Positions 186 to 243 (PAGDGGTNDQGPSRAQSTASSGGSGRPRSTESPQSGAQASTTPTSPPTTQSTGDDPAA) are disordered. A compositionally biased stretch (polar residues) spans 194–206 (DQGPSRAQSTASS). Residues 220 to 241 (SGAQASTTPTSPPTTQSTGDDP) show a composition bias toward low complexity.

The protein belongs to the FAD-binding monooxygenase family. In terms of assembly, homodimer. FAD is required as a cofactor.

In terms of biological role, probable FAD-binding monooxygenase; part of the gene cluster that mediates the biosynthesis of luteodienoside A, a glycosylated polyketide consisting of an unusual 1-O-beta-D-glucopyranosyl-myo-inositol (glucinol) ester of 3-hydroxy-2,2,4-trimethylocta-4,6-dienoic acid. The HR-PKS ltbA produces the trimethylated polyketide chain from acetyl-CoA, malonyl-CoA and S-adenosylmethionine (SAM), and the ltbA cAT domain then uses glucinol produced by the glycosyltransferase ltbB as an offloading substrate to release luteodienoside A. Since ltbA and ltbB are sufficient for the biosynthesis of luteodienoside A, the functions of the methyltransferase ltbC and the FAD-binding monooxygenase ltbD within the pathway remain obscur. This is Probable FAD-binding monooxygenase ltbD from Aspergillus luteorubrus.